Reading from the N-terminus, the 70-residue chain is DNA gyrase inhibitor YacG (70 aa).

Zn(2+)-binding residues include Cys21, Cys24, Cys36, and Cys40.

Belongs to the DNA gyrase inhibitor YacG family. Interacts with GyrB. The cofactor is Zn(2+).

Functionally, inhibits all the catalytic activities of DNA gyrase by preventing its interaction with DNA. Acts by binding directly to the C-terminal domain of GyrB, which probably disrupts DNA binding by the gyrase. The protein is DNA gyrase inhibitor YacG of Rhizobium meliloti (strain 1021) (Ensifer meliloti).